A 245-amino-acid polypeptide reads, in one-letter code: Lytic switch protein BZLF1 (245 aa).

Residues 1–167 are transactivation; the sequence is MMDPNSTSED…RTRKPLQPES (167 aa). Phosphothreonine occurs at positions 14 and 159. The interval 145-167 is disordered; sequence GAPQPAPAAAPARRTRKPLQPES. The short motif at 157–194 is the Bipartite nuclear localization signal element; sequence RRTRKPLQPESLEECDSELEIKRYKNRVASRKCRAKFK. A phosphoserine mark is found at Ser-167, Ser-173, and Ser-186. The basic motif stretch occupies residues 178–195; the sequence is KRYKNRVASRKCRAKFKH. A bZIP domain is found at 178–228; the sequence is KRYKNRVASRKCRAKFKHLLQHYREVASAKSSENDRLRLLLKQMCPSLDVD. The segment at 196-228 is leucine-zipper; the sequence is LLQHYREVASAKSSENDRLRLLLKQMCPSLDVD. The tract at residues 229–245 is accessory activation domain; that stretch reads SIIPRTPDVLHEDLLNF.

The protein belongs to the bZIP family. As to quaternary structure, homodimer. Interacts (via b-ZIP domain) with the DNA polymerase processivity factor BMRF1 (via N-terminus); this interaction may inhibit BZLF1-induced transcription of the BMRF1 promoter. Interacts with human UBN1, CRTC2 and RACK1. Interacts (via N-terminus) with human PAX5 (via N-terminus); this interaction inhibits BZLF1-mediated lytic viral reactivation. Interacts (via leucine-zipper domain) with host CEBPA; this interaction induces G1 host cell cycle arrest. Interacts (via C-terminus) with host TP53BP1 (via C-terminus); this interaction is involved in the activation of the viral lytic cycle. Interacts with host chromatin-remodeling ATPase INO80; this interaction participates to the activation of early lytic viral genes by BZLF1. Interacts with host regulator of chromatin SMARCA5/hSNF2H; this interaction participates to the activation of early lytic viral genes by BZLF1. Interacts with host PLSCR1/Phospholipid scramblase 1; this interaction negatively regulates the transcriptional regulatory activity of BZLF1 by preventing the formation of the BZLF1-CBP complex.

The protein resides in the host nucleus. Its function is as follows. Transcription factor that acts as a molecular switch to induce the transition from the latent to the lytic or productive phase of the virus cycle. Mediates the switch from the latent to the lytic cycle of infection in cells containing a highly methylated viral genome. Probably binds to silenced chromatin and recruits host chromatin-remodeling enzymes. Regulates this switch by binding to 2 types of ZEBRA response elements (ZREs): the CpG-free AP-1 like elements (latency) and the methylated CpG-containing elements (lytic replication). Activates preferentially the methylated forms of the viral lytic R (BRLF1) and Na (BRRF1) gene promoters, the latters being the first genes activated during Z-mediated reactivation in latently infected cells. BZLF1 and BRLF1 act together to trigger lytic replication. Also binds the lytic origin of replication, oriLyt. Induces G1 cell cycle arrest by stabilizing the host CCAAT/enhancer binding protein CEBPA. This function is important because the lytic cycle preferentially takes place in host cells arrested in G1. This chain is Lytic switch protein BZLF1, found in Homo sapiens (Human).